The chain runs to 681 residues: Transmembrane protein 168-A (681 aa).

9 helical membrane-spanning segments follow: residues 16-36 (FLRC…CLGM), 47-67 (MILV…ILYY), 73-93 (SASL…LCFL), 135-155 (PVVI…ASIS), 156-176 (LVFD…ALII), 184-204 (LALP…FQSL), 252-272 (FSLF…AFKL), 281-301 (VIPG…VFLV), and 346-365 (LVLF…WQVA). N-linked (GlcNAc...) asparagine glycosylation is present at Asn517.

The protein belongs to the TMEM168 family.

The protein resides in the nucleus membrane. In terms of biological role, plays a key role in maintaining the cardiac electrical stability by modulating cell surface expression of SCN5A. In Danio rerio (Zebrafish), this protein is Transmembrane protein 168-A (tmem168a).